The following is a 66-amino-acid chain: Cold shock-like protein (66 aa).

In terms of domain architecture, CSD spans 3–62; it reads GKVKWFDSKKGYGFITKDEGGDVFVHWSAIEMEGFKTLKEGQVVEFEIQEGKKGPQAAHV.

In terms of assembly, monomer.

Its subcellular location is the cytoplasm. The protein is Cold shock-like protein (csp) of Thermotoga maritima (strain ATCC 43589 / DSM 3109 / JCM 10099 / NBRC 100826 / MSB8).